Reading from the N-terminus, the 280-residue chain is MESTHEYCIMNTTPNIHAMIVAAGRGSRFGASIAKQYTLLQGQTLLQHSVARLAESNYIDRCLLVVAQDDSTAQTLSFALPIYYAIGGTERWQSVQAGVEAMINAGADESDLVVIHDAARPAVPTHDIDAVIQAAMLEPYGAILATPVADTLKQSYIASNTLSTPAYEAPLSLQQLNTQPELANSQSGYDTLHTYAQKTIDRSHMWQAQTPQVFRLGQLQQVLNYVTKHNLAITDEASAFEHLELPIRLVTGSRQNIKLTYPDDIILLTAILKAQFASIS.

It belongs to the IspD/TarI cytidylyltransferase family. IspD subfamily.

The catalysed reaction is 2-C-methyl-D-erythritol 4-phosphate + CTP + H(+) = 4-CDP-2-C-methyl-D-erythritol + diphosphate. Its pathway is isoprenoid biosynthesis; isopentenyl diphosphate biosynthesis via DXP pathway; isopentenyl diphosphate from 1-deoxy-D-xylulose 5-phosphate: step 2/6. In terms of biological role, catalyzes the formation of 4-diphosphocytidyl-2-C-methyl-D-erythritol from CTP and 2-C-methyl-D-erythritol 4-phosphate (MEP). The polypeptide is 2-C-methyl-D-erythritol 4-phosphate cytidylyltransferase (Psychrobacter cryohalolentis (strain ATCC BAA-1226 / DSM 17306 / VKM B-2378 / K5)).